The sequence spans 368 residues: Glutamate 5-kinase (368 aa).

ATP is bound at residue Lys-9. The substrate site is built by Ser-49, Asp-136, and Asn-148. ATP contacts are provided by residues 168–169 (TD) and 210–216 (TGGMMTK). The PUA domain occupies 275 to 353 (AGIITIDNGA…ADIENVLGYE (79 aa)).

Belongs to the glutamate 5-kinase family.

It is found in the cytoplasm. It catalyses the reaction L-glutamate + ATP = L-glutamyl 5-phosphate + ADP. It functions in the pathway amino-acid biosynthesis; L-proline biosynthesis; L-glutamate 5-semialdehyde from L-glutamate: step 1/2. Its function is as follows. Catalyzes the transfer of a phosphate group to glutamate to form L-glutamate 5-phosphate. The protein is Glutamate 5-kinase of Haemophilus influenzae (strain PittGG).